The primary structure comprises 885 residues: Leucine--tRNA ligase (885 aa).

The 'HIGH' region motif lies at 46–56 (PYPSGALHMGH). The short motif at 638–642 (KMSKS) is the 'KMSKS' region element. ATP is bound at residue Lys641.

It belongs to the class-I aminoacyl-tRNA synthetase family.

Its subcellular location is the cytoplasm. It carries out the reaction tRNA(Leu) + L-leucine + ATP = L-leucyl-tRNA(Leu) + AMP + diphosphate. The polypeptide is Leucine--tRNA ligase (Xanthomonas campestris pv. campestris (strain B100)).